The chain runs to 638 residues: Threonine--tRNA ligase (638 aa).

In terms of domain architecture, TGS spans 1 to 61 (MPNIKLPDGS…ERDSELAILT (61 aa)). A catalytic region spans residues 242–533 (DHRKLGRQLD…LIEHYAGAMP (292 aa)). The Zn(2+) site is built by Cys333, His384, and His510.

This sequence belongs to the class-II aminoacyl-tRNA synthetase family. In terms of assembly, homodimer. Zn(2+) is required as a cofactor.

It is found in the cytoplasm. It carries out the reaction tRNA(Thr) + L-threonine + ATP = L-threonyl-tRNA(Thr) + AMP + diphosphate + H(+). In terms of biological role, catalyzes the attachment of threonine to tRNA(Thr) in a two-step reaction: L-threonine is first activated by ATP to form Thr-AMP and then transferred to the acceptor end of tRNA(Thr). Also edits incorrectly charged L-seryl-tRNA(Thr). The polypeptide is Threonine--tRNA ligase (Azoarcus sp. (strain BH72)).